The chain runs to 166 residues: Peroxynitrite isomerase Rv2717c (166 aa).

The short motif at 28-34 (GTWRGQG) is the GXWXGXG element. Positions 40 and 158 each coordinate heme b.

Belongs to the nitrobindin family. Homodimer. The cofactor is heme b.

It localises to the cytoplasm. The enzyme catalyses peroxynitrite = nitrate. It functions in the pathway nitrogen metabolism. Heme-binding protein able to scavenge peroxynitrite and to protect free L-tyrosine against peroxynitrite-mediated nitration, by acting as a peroxynitrite isomerase that converts peroxynitrite to nitrate. Therefore, this protein likely plays a role in peroxynitrite sensing and in the detoxification of reactive nitrogen and oxygen species (RNS and ROS, respectively). Is able to bind nitric oxide (NO) in vitro, but may act as a sensor of peroxynitrite levels in vivo. This is Peroxynitrite isomerase Rv2717c from Arabidopsis thaliana (Mouse-ear cress).